The chain runs to 608 residues: Elongation factor 4 (608 aa).

Positions 11 to 193 constitute a tr-type G domain; sequence DHIRNFSIVA…AIVNRLPPPK (183 aa). GTP contacts are provided by residues 23–28 and 140–143; these read DHGKST and NKID.

The protein belongs to the TRAFAC class translation factor GTPase superfamily. Classic translation factor GTPase family. LepA subfamily.

It is found in the cell inner membrane. The catalysed reaction is GTP + H2O = GDP + phosphate + H(+). Its function is as follows. Required for accurate and efficient protein synthesis under certain stress conditions. May act as a fidelity factor of the translation reaction, by catalyzing a one-codon backward translocation of tRNAs on improperly translocated ribosomes. Back-translocation proceeds from a post-translocation (POST) complex to a pre-translocation (PRE) complex, thus giving elongation factor G a second chance to translocate the tRNAs correctly. Binds to ribosomes in a GTP-dependent manner. The polypeptide is Elongation factor 4 (Agrobacterium fabrum (strain C58 / ATCC 33970) (Agrobacterium tumefaciens (strain C58))).